The chain runs to 285 residues: Probable endonuclease 4 (285 aa).

9 residues coordinate Zn(2+): His-69, His-109, Glu-145, Asp-179, His-182, His-216, Asp-229, His-231, and Glu-261.

Belongs to the AP endonuclease 2 family. Requires Zn(2+) as cofactor.

The enzyme catalyses Endonucleolytic cleavage to 5'-phosphooligonucleotide end-products.. In terms of biological role, endonuclease IV plays a role in DNA repair. It cleaves phosphodiester bonds at apurinic or apyrimidinic (AP) sites, generating a 3'-hydroxyl group and a 5'-terminal sugar phosphate. In Salmonella typhi, this protein is Probable endonuclease 4.